Consider the following 207-residue polypeptide: Small ribosomal subunit protein uS7y (207 aa).

Residue alanine 2 is modified to N-acetylalanine.

This sequence belongs to the universal ribosomal protein uS7 family. Expressed in root tips, lateral root primordia, leaf primordia, shoot apical meristem and vasculature of cotyledons.

This Arabidopsis thaliana (Mouse-ear cress) protein is Small ribosomal subunit protein uS7y.